Here is an 845-residue protein sequence, read N- to C-terminus: DNA replication licensing factor MCM7 (845 aa).

An MCM domain is found at 410–617; it reads VYNRLAKSIA…DDEKLAEHVT (208 aa). Residues tyrosine 423, glycine 463, alanine 465, lysine 466, serine 467, asparagine 568, arginine 593, and arginine 687 each coordinate ATP. The Arginine finger motif lies at 592 to 595; it reads SRFD. Threonine 811 carries the phosphothreonine modification. The interval 812–845 is disordered; it reads DQEDSLVSTPKLAPQTTASANVSAQDSDIDLQDA. Phosphoserine is present on serine 819. Residues 825 to 837 show a composition bias toward polar residues; sequence PQTTASANVSAQD. Position 838 is a phosphoserine (serine 838).

This sequence belongs to the MCM family. In terms of assembly, component of the MCM2-7 complex. The complex forms a toroidal hexameric ring with the proposed subunit order MCM2-MCM6-MCM4-MCM7-MCM3-MCM5; loaded onto DNA, forms a head-head double hexamer. Interacts with CSM1 and MCM10.

The protein resides in the cytoplasm. It is found in the nucleus. It catalyses the reaction ATP + H2O = ADP + phosphate + H(+). Its function is as follows. Acts as a component of the MCM2-7 complex (MCM complex) which is the putative replicative helicase essential for 'once per cell cycle' DNA replication initiation and elongation in eukaryotic cells. Core component of CDC45-MCM-GINS (CMG) helicase, the molecular machine that unwinds template DNA during replication, and around which the replisome is built. The active ATPase sites in the MCM2-7 ring are formed through the interaction surfaces of two neighboring subunits such that a critical structure of a conserved arginine finger motif is provided in trans relative to the ATP-binding site of the Walker A box of the adjacent subunit. The six ATPase active sites, however, are likely to contribute differentially to the complex helicase activity. Once loaded onto DNA, double hexamers can slide on dsDNA in the absence of ATPase activity. The protein is DNA replication licensing factor MCM7 (MCM7) of Saccharomyces cerevisiae (strain ATCC 204508 / S288c) (Baker's yeast).